The primary structure comprises 258 residues: Tryptophan synthase alpha chain (258 aa).

Catalysis depends on proton acceptor residues glutamate 50 and aspartate 61.

It belongs to the TrpA family. As to quaternary structure, tetramer of two alpha and two beta chains.

It catalyses the reaction (1S,2R)-1-C-(indol-3-yl)glycerol 3-phosphate + L-serine = D-glyceraldehyde 3-phosphate + L-tryptophan + H2O. Its pathway is amino-acid biosynthesis; L-tryptophan biosynthesis; L-tryptophan from chorismate: step 5/5. The alpha subunit is responsible for the aldol cleavage of indoleglycerol phosphate to indole and glyceraldehyde 3-phosphate. The sequence is that of Tryptophan synthase alpha chain from Clostridium beijerinckii (strain ATCC 51743 / NCIMB 8052) (Clostridium acetobutylicum).